Here is a 415-residue protein sequence, read N- to C-terminus: Serine hydroxymethyltransferase (415 aa).

(6S)-5,6,7,8-tetrahydrofolate contacts are provided by residues Leu-117 and 121-123 (GHL). Lys-226 is modified (N6-(pyridoxal phosphate)lysine).

It belongs to the SHMT family. In terms of assembly, homodimer. Pyridoxal 5'-phosphate is required as a cofactor.

The protein resides in the cytoplasm. It catalyses the reaction (6R)-5,10-methylene-5,6,7,8-tetrahydrofolate + glycine + H2O = (6S)-5,6,7,8-tetrahydrofolate + L-serine. It functions in the pathway one-carbon metabolism; tetrahydrofolate interconversion. Its pathway is amino-acid biosynthesis; glycine biosynthesis; glycine from L-serine: step 1/1. Functionally, catalyzes the reversible interconversion of serine and glycine with tetrahydrofolate (THF) serving as the one-carbon carrier. This reaction serves as the major source of one-carbon groups required for the biosynthesis of purines, thymidylate, methionine, and other important biomolecules. Also exhibits THF-independent aldolase activity toward beta-hydroxyamino acids, producing glycine and aldehydes, via a retro-aldol mechanism. In Dehalococcoides mccartyi (strain ATCC BAA-2100 / JCM 16839 / KCTC 5957 / BAV1), this protein is Serine hydroxymethyltransferase.